The sequence spans 64 residues: Large ribosomal subunit protein bL35 (64 aa).

Over residues 1–14 (MKNKTHKGTAKRVK) the composition is skewed to basic residues. Residues 1–29 (MKNKTHKGTAKRVKVTGSGKLVREQANRR) form a disordered region.

This sequence belongs to the bacterial ribosomal protein bL35 family.

The chain is Large ribosomal subunit protein bL35 from Corynebacterium glutamicum (strain R).